The primary structure comprises 397 residues: Myb family transcription factor PHL4 (397 aa).

Positions 1-27 (MIPNDDDDANSMKNYPLNDDDANSMKN) are disordered. The HTH myb-type domain maps to 228-288 (AAAKGRMRWT…HLQKYRTAKY (61 aa)). Residues 259-284 (PKGVLKHMKVEGLTIFHVKSHLQKYR) constitute a DNA-binding region (H-T-H motif). The tract at residues 319 to 339 (TETLRIQMEHQKKLHEQLESL) is coiled coil. Positions 332–337 (LHEQLE) match the LHEQLE motif. The interval 359-397 (KQNMGFGGPEQGEKTSAKTPENGSEESESPRPKRPRNEE) is disordered. The segment covering 386–397 (ESPRPKRPRNEE) has biased composition (basic and acidic residues). Ser-387 carries the phosphoserine modification.

It belongs to the MYB-CC family.

Its subcellular location is the nucleus. Its function is as follows. Transcription factor involved in male gametophyte development. The polypeptide is Myb family transcription factor PHL4 (Arabidopsis thaliana (Mouse-ear cress)).